The sequence spans 128 residues: Keratin-associated protein 2-3 (128 aa).

The interval 5–112 (CCGSTLSSLS…SVQSPCCRPP (108 aa)) is 10 X 5 AA repeats of C-C-[CDPQRWG]-[APRS]-[CIPSTVD].

It belongs to the KRTAP type 2 family. In terms of assembly, interacts with hair keratins.

Its function is as follows. In the hair cortex, hair keratin intermediate filaments are embedded in an interfilamentous matrix, consisting of hair keratin-associated proteins (KRTAP), which are essential for the formation of a rigid and resistant hair shaft through their extensive disulfide bond cross-linking with abundant cysteine residues of hair keratins. The matrix proteins include the high-sulfur and high-glycine-tyrosine keratins. The polypeptide is Keratin-associated protein 2-3 (KRTAP2-3) (Homo sapiens (Human)).